The following is a 188-amino-acid chain: Elongation factor P-like protein (188 aa).

It belongs to the elongation factor P family.

In Alcanivorax borkumensis (strain ATCC 700651 / DSM 11573 / NCIMB 13689 / SK2), this protein is Elongation factor P-like protein.